The chain runs to 443 residues: Mimosinase, chloroplastic (443 aa).

The transit peptide at 1-43 (MALSSTFLNPLVSSVAVNPQPKITSGKGFRVNCLIRTQQTVIK) directs the protein to the chloroplast. Residues Y105, R107, G135, M136, S254, and T256 each coordinate pyridoxal 5'-phosphate. K257 carries the post-translational modification N6-(pyridoxal phosphate)lysine.

Belongs to the trans-sulfuration enzymes family. In terms of assembly, forms homodimers. May form homotetramers from two homodimers. Pyridoxal 5'-phosphate is required as a cofactor.

It localises to the plastid. The protein resides in the chloroplast. It carries out the reaction L-mimosine + H2O = 3-hydroxy-4H-pyrid-4-one + pyruvate + NH4(+). In terms of biological role, catalyzes the degradation of mimosine, which is a toxic secondary metabolite found in all Leucaena and Mimosa species. The polypeptide is Mimosinase, chloroplastic (Leucaena leucocephala (White popinac)).